The chain runs to 420 residues: Pre-mRNA-splicing factor RBM22 (420 aa).

Ala-2 carries the N-acetylalanine modification. 2 positions are modified to phosphoserine: Ser-4 and Ser-102. Residues Lys-139 and Lys-149 each participate in a glycyl lysine isopeptide (Lys-Gly) (interchain with G-Cter in SUMO2) cross-link. The segment at 159–186 (RNRPHICSFWVKGECKRGEECPYRHEKP) adopts a C3H1-type zinc-finger fold. Lys-212 is subject to N6-acetyllysine. The RRM domain maps to 232-305 (TTLYVGGLGD…RRLNVKWGRS (74 aa)). Residue Lys-290 forms a Glycyl lysine isopeptide (Lys-Gly) (interchain with G-Cter in SUMO2) linkage. 2 disordered regions span residues 303-343 (GRSQ…AAEE) and 372-420 (APPP…HSSP). The span at 309 to 318 (RGKEKEKDGT) shows a compositional bias: basic and acidic residues.

It belongs to the SLT11 family. Component of the pre-catalytic and catalytic spliceosome complexes. Component of the postcatalytic spliceosome P complex. Interacts with PDCD6; the interaction induces translocation of PDCD6 in the cytoplasm. Interacts with PPIL1.

The protein localises to the nucleus. The protein resides in the cytoplasm. Its function is as follows. Required for pre-mRNA splicing as component of the activated spliceosome. Involved in the first step of pre-mRNA splicing. Binds directly to the internal stem-loop (ISL) domain of the U6 snRNA and to the pre-mRNA intron near the 5' splice site during the activation and catalytic phases of the spliceosome cycle. Involved in both translocations of the nuclear SLU7 to the cytoplasm and the cytosolic calcium-binding protein PDCD6 to the nucleus upon cellular stress responses. This chain is Pre-mRNA-splicing factor RBM22 (RBM22), found in Bos taurus (Bovine).